The sequence spans 910 residues: MFSSIARAIIGTSNDRALKAYRRRIAEINGHEAALATLDDAALQGKTSEFRDRLAAGESLDRLLPEAFAVCREAAKRVLGMRHFDVQLIGGMVLHDGKIAEMKTGEGKTLVATLPVYLNALSGKGVHVVTVNDYLAKRDAGWMGQLYNFLGLSVGVIVPGLEDDARRDAYAADITYGTNNEFGFDYLRDNMKYALADMVQRDFNYAIVDEVDSILIDEARTPLIISGPSDEPTELYNQVDGIVKQLVEDPDTYDKDEKFKTVNLTELGSERVEQMLSEAGLLTEGNLYDVFNVSLVHHTNQSLRAHTLFTRDVDYIVKDGQVIIIDEFTGRMMEGRRYSDGLHQALEAKEHVTVERENQTLASITFQNYFRLYPKLSGMTGTAMTEADEFDEIYKLAVVEIPTNVPVARKDGDDEVYRSADEKYEAVAALIEECRQRQQPVLVGTTSIEKSEIISNLLNSRKIPHAVLNARFHEQEAAIVAEAGAPGAVTIATNMAGRGTDIKLGGNLEMRLKTELERLPESARPAREAEIRAEIEAAHDIVHAAGGLFVIGTERHESRRVDNQLRGRSGRQGDPGASRFFLSLEDDLMRIFGSDRMGPMLEKLGLKDGEAIIHPWINKALEKAQKKVEARNFDTRKNLLKYDDVMNNQRKEVYAQRREFMRAESVADVIGEMRADTIAQMVERRIPEKAYAEQWESAELAEDVKRVFGLELPVVDWAAEEGIDESHLRERISEAVEAHMAAKAANFGPDFMRFLEKSILLQTLDHLWKEHLLALDHLRQGIGLRAYGQRDPLNEYKAEAFALFTAMLEDLKEQVSSVLAHVELGSDPATAPAPAFDPASMFTSHPASGPYDGVALAEPQPTLAPEMAVSTYRAESVDPNRPETWASTPRNAACPCGSGKKYKYCHGRVT.

ATP is bound by residues Gln-87, Gly-105–Thr-109, and Asp-501. The Zn(2+) site is built by Cys-894, Cys-896, Cys-905, and His-906.

Belongs to the SecA family. Monomer and homodimer. Part of the essential Sec protein translocation apparatus which comprises SecA, SecYEG and auxiliary proteins SecDF-YajC and YidC. Requires Zn(2+) as cofactor.

It localises to the cell inner membrane. It is found in the cytoplasm. The enzyme catalyses ATP + H2O + cellular proteinSide 1 = ADP + phosphate + cellular proteinSide 2.. In terms of biological role, part of the Sec protein translocase complex. Interacts with the SecYEG preprotein conducting channel. Has a central role in coupling the hydrolysis of ATP to the transfer of proteins into and across the cell membrane, serving both as a receptor for the preprotein-SecB complex and as an ATP-driven molecular motor driving the stepwise translocation of polypeptide chains across the membrane. The chain is Protein translocase subunit SecA from Acidiphilium cryptum (strain JF-5).